Consider the following 638-residue polypeptide: 2-isopropylmalate synthase (638 aa).

Residues proline 72–proline 346 form the Pyruvate carboxyltransferase domain. Mg(2+) is bound by residues aspartate 81, histidine 285, histidine 287, and asparagine 321. The segment at valine 488–arginine 638 is regulatory domain.

This sequence belongs to the alpha-IPM synthase/homocitrate synthase family. LeuA type 2 subfamily. As to quaternary structure, homodimer. The cofactor is Mg(2+).

It localises to the cytoplasm. The enzyme catalyses 3-methyl-2-oxobutanoate + acetyl-CoA + H2O = (2S)-2-isopropylmalate + CoA + H(+). Its pathway is amino-acid biosynthesis; L-leucine biosynthesis; L-leucine from 3-methyl-2-oxobutanoate: step 1/4. Functionally, catalyzes the condensation of the acetyl group of acetyl-CoA with 3-methyl-2-oxobutanoate (2-ketoisovalerate) to form 3-carboxy-3-hydroxy-4-methylpentanoate (2-isopropylmalate). The chain is 2-isopropylmalate synthase from Bifidobacterium longum subsp. infantis (strain ATCC 15697 / DSM 20088 / JCM 1222 / NCTC 11817 / S12).